Here is a 76-residue protein sequence, read N- to C-terminus: Translation initiation factor IF-1 (76 aa).

An S1-like domain is found at 1-76 (MEDMAKKDGV…TRGRIVYRYK (76 aa)).

It belongs to the IF-1 family. As to quaternary structure, component of the 30S ribosomal translation pre-initiation complex which assembles on the 30S ribosome in the order IF-2 and IF-3, IF-1 and N-formylmethionyl-tRNA(fMet); mRNA recruitment can occur at any time during PIC assembly.

The protein localises to the cytoplasm. One of the essential components for the initiation of protein synthesis. Stabilizes the binding of IF-2 and IF-3 on the 30S subunit to which N-formylmethionyl-tRNA(fMet) subsequently binds. Helps modulate mRNA selection, yielding the 30S pre-initiation complex (PIC). Upon addition of the 50S ribosomal subunit IF-1, IF-2 and IF-3 are released leaving the mature 70S translation initiation complex. The protein is Translation initiation factor IF-1 of Renibacterium salmoninarum (strain ATCC 33209 / DSM 20767 / JCM 11484 / NBRC 15589 / NCIMB 2235).